The chain runs to 285 residues: Foldase protein PrsA 2 (285 aa).

The signal sequence occupies residues 1 to 20 (MRGKHIFIITALISILMLSA). Cys21 carries N-palmitoyl cysteine lipidation. The S-diacylglycerol cysteine moiety is linked to residue Cys21. The PpiC domain occupies 134-224 (KPEIKASHIL…NGYHVIKLTD (91 aa)).

Belongs to the PrsA family.

Its subcellular location is the cell membrane. It catalyses the reaction [protein]-peptidylproline (omega=180) = [protein]-peptidylproline (omega=0). In terms of biological role, plays a major role in protein secretion by helping the post-translocational extracellular folding of several secreted proteins. In Bacillus cereus (strain ATCC 14579 / DSM 31 / CCUG 7414 / JCM 2152 / NBRC 15305 / NCIMB 9373 / NCTC 2599 / NRRL B-3711), this protein is Foldase protein PrsA 2 (prsA2).